We begin with the raw amino-acid sequence, 203 residues long: 5-formyltetrahydrofolate cyclo-ligase (203 aa).

N-acetylalanine is present on alanine 2. Residues 10 to 14 and arginine 14 contribute to the ATP site; that span reads KRGLR. Substrate contacts are provided by residues leucine 56, glutamate 61, and 148–152; that span reads RGKGY. ATP is bound at residue 145–153; sequence RLGRGKGYY. Mg(2+)-binding residues include aspartate 154 and aspartate 189.

The protein belongs to the 5-formyltetrahydrofolate cyclo-ligase family. In terms of assembly, monomer. It depends on Mg(2+) as a cofactor.

The protein localises to the cytoplasm. It carries out the reaction (6S)-5-formyl-5,6,7,8-tetrahydrofolate + ATP = (6R)-5,10-methenyltetrahydrofolate + ADP + phosphate. Its function is as follows. Contributes to tetrahydrofolate metabolism. Helps regulate carbon flow through the folate-dependent one-carbon metabolic network that supplies carbon for the biosynthesis of purines, thymidine and amino acids. Catalyzes the irreversible conversion of 5-formyltetrahydrofolate (5-CHO-H(4)PteGlu) to yield 5,10-methenyltetrahydrofolate. This Mus musculus (Mouse) protein is 5-formyltetrahydrofolate cyclo-ligase (Mthfs).